A 149-amino-acid polypeptide reads, in one-letter code: Calmodulin (149 aa).

At A2 the chain carries N-acetylalanine. EF-hand domains lie at 8–43, 44–79, 81–116, and 117–149; these read EQIA…LGQN, PTEA…KMKE, DSEE…LGEK, and LTDD…MVSK. The residue at position 14 (K14) is an N6,N6-dimethyllysine. The Ca(2+) site is built by D21, D23, D25, T27, E32, D57, D59, N61, T63, E68, D94, D96, N98, and E105. Residue K116 is modified to N6,N6,N6-trimethyllysine. Ca(2+) contacts are provided by D130, D132, D134, H136, and E141.

Belongs to the calmodulin family. Post-translationally, the pantophobiac mutant CAM2 is undermethylated on Lys-116.

In terms of biological role, calmodulin mediates the control of a large number of enzymes, ion channels and other proteins by Ca(2+). Among the enzymes to be stimulated by the calmodulin-Ca(2+) complex are a number of protein kinases and phosphatases. The sequence is that of Calmodulin (CAM) from Paramecium tetraurelia.